An 89-amino-acid chain; its full sequence is UPF0335 protein RPC_3979 (89 aa).

The protein belongs to the UPF0335 family.

This Rhodopseudomonas palustris (strain BisB18) protein is UPF0335 protein RPC_3979.